A 61-amino-acid polypeptide reads, in one-letter code: Odorranain-A6 (61 aa).

Residues 1 to 22 (MFSMKKSLLLLFFLGTISLSLC) form the signal peptide. Residues 23 to 45 (EQERDAEEEEGSENGAEDIKINR) constitute a propeptide that is removed on maturation.

It belongs to the frog skin active peptide (FSAP) family. Brevinin subfamily. Expressed by the skin glands.

The protein localises to the secreted. This chain is Odorranain-A6, found in Odorrana hainanensis (Odor frog).